The primary structure comprises 266 residues: DNA repair protein RecO (266 aa).

Belongs to the RecO family.

In terms of biological role, involved in DNA repair and RecF pathway recombination. In Synechococcus elongatus (strain ATCC 33912 / PCC 7942 / FACHB-805) (Anacystis nidulans R2), this protein is DNA repair protein RecO.